The sequence spans 152 residues: Deoxyuridine 5'-triphosphate nucleotidohydrolase (152 aa).

Residues 71–73 (RSG), N84, and 88–90 (TID) contribute to the substrate site.

It belongs to the dUTPase family. Mg(2+) is required as a cofactor.

It catalyses the reaction dUTP + H2O = dUMP + diphosphate + H(+). It participates in pyrimidine metabolism; dUMP biosynthesis; dUMP from dCTP (dUTP route): step 2/2. In terms of biological role, this enzyme is involved in nucleotide metabolism: it produces dUMP, the immediate precursor of thymidine nucleotides and it decreases the intracellular concentration of dUTP so that uracil cannot be incorporated into DNA. The polypeptide is Deoxyuridine 5'-triphosphate nucleotidohydrolase (Roseobacter denitrificans (strain ATCC 33942 / OCh 114) (Erythrobacter sp. (strain OCh 114))).